The following is a 329-amino-acid chain: L-carnitine dehydrogenase (329 aa).

19–24 (GAGVIG) serves as a coordination point for NAD(+).

It belongs to the 3-hydroxyacyl-CoA dehydrogenase family. L-carnitine dehydrogenase subfamily. Homodimer.

It localises to the cytoplasm. The enzyme catalyses carnitine + NAD(+) = 3-dehydrocarnitine + NADH + H(+). It participates in amine and polyamine metabolism; carnitine metabolism. Its function is as follows. Catalyzes the NAD(+)-dependent oxidation of L-carnitine to 3-dehydrocarnitine. This chain is L-carnitine dehydrogenase, found in Nocardiopsis dassonvillei (strain ATCC 23218 / DSM 43111 / CIP 107115 / JCM 7437 / KCTC 9190 / NBRC 14626 / NCTC 10488 / NRRL B-5397 / IMRU 509) (Actinomadura dassonvillei).